The chain runs to 1040 residues: Multidrug resistance protein MdtB (1040 aa).

12 helical membrane passes run 16–36 (FIMR…AGII), 347–367 (LMMA…NIPA), 369–389 (IIPG…MVFL), 396–416 (LTLM…IVVI), 440–460 (IGFT…PLLF), 472–492 (FAIT…TLTP), 537–557 (WLTL…WVFI), 863–883 (LGST…VLGI), 888–908 (FIHP…ALLA), 911–931 (IAGS…IGIV), 968–988 (ILMT…STGV), and 998–1018 (IGMV…TPVI).

It belongs to the resistance-nodulation-cell division (RND) (TC 2.A.6) family. MdtB subfamily. As to quaternary structure, part of a tripartite efflux system composed of MdtA, MdtB and MdtC. MdtB forms a heteromultimer with MdtC.

It localises to the cell inner membrane. The sequence is that of Multidrug resistance protein MdtB from Shigella boydii serotype 4 (strain Sb227).